The following is a 220-amino-acid chain: Aklanonic acid methyltransferase DauC (220 aa).

Belongs to the methyltransferase superfamily. DnrC family. In terms of assembly, homodimer.

The enzyme catalyses aklanonate + S-adenosyl-L-methionine = methyl aklanonate + S-adenosyl-L-homocysteine. It functions in the pathway antibiotic biosynthesis; daunorubicin biosynthesis. The protein operates within antibiotic biosynthesis; carminomycin biosynthesis. It participates in antibiotic biosynthesis; rhodomycin biosynthesis. Its pathway is antibiotic biosynthesis; aclacinomycin biosynthesis. Its function is as follows. Involved in the biosynthesis of aklavinone which is an important precursor common to the formation of the clinically significant anthracyclines such as carminomycin, daunorubicin (daunomycin), rhodomycin, aclacinomycin T (aklavin) and aclacinomycin A (aclarubicin). These compounds are aromatic polyketide antibiotics that exhibit high cytotoxicity and are widely applied in the chemotherapy of a variety of cancers. Catalyzes the methyl esterification of aklanonic acid to yield aklanonic acid methyl ester. In Streptomyces sp. (strain C5), this protein is Aklanonic acid methyltransferase DauC (dauC).